Here is a 139-residue protein sequence, read N- to C-terminus: Transcription antitermination protein NusB (139 aa).

It belongs to the NusB family.

In terms of biological role, involved in transcription antitermination. Required for transcription of ribosomal RNA (rRNA) genes. Binds specifically to the boxA antiterminator sequence of the ribosomal RNA (rrn) operons. The sequence is that of Transcription antitermination protein NusB from Salmonella agona (strain SL483).